Reading from the N-terminus, the 449-residue chain is Tryptophan--tRNA ligase (449 aa).

ATP is bound by residues Thr10–Thr12 and Gly18–Asn19. The 'HIGH' region motif lies at Thr11–Asn19. Asp143 provides a ligand contact to L-tryptophan. Residues Gly155–Asp157, Leu197, and Lys204–Ser208 each bind ATP. Residues Lys204–Ser208 carry the 'KMSKS' region motif.

The protein belongs to the class-I aminoacyl-tRNA synthetase family. Homodimer.

Its subcellular location is the cytoplasm. The enzyme catalyses tRNA(Trp) + L-tryptophan + ATP = L-tryptophyl-tRNA(Trp) + AMP + diphosphate + H(+). Its function is as follows. Catalyzes the attachment of tryptophan to tRNA(Trp). This is Tryptophan--tRNA ligase from Pseudomonas syringae pv. tomato (strain ATCC BAA-871 / DC3000).